The chain runs to 277 residues: Sulfur carrier protein FdhD (277 aa).

Residue C123 is the Cysteine persulfide intermediate of the active site. Mo-bis(molybdopterin guanine dinucleotide) is bound at residue 263–268; the sequence is FVRGNK.

This sequence belongs to the FdhD family.

Its subcellular location is the cytoplasm. Functionally, required for formate dehydrogenase (FDH) activity. Acts as a sulfur carrier protein that transfers sulfur from IscS to the molybdenum cofactor prior to its insertion into FDH. This Corynebacterium efficiens (strain DSM 44549 / YS-314 / AJ 12310 / JCM 11189 / NBRC 100395) protein is Sulfur carrier protein FdhD.